The sequence spans 156 residues: SsrA-binding protein (156 aa).

It belongs to the SmpB family.

It is found in the cytoplasm. In terms of biological role, required for rescue of stalled ribosomes mediated by trans-translation. Binds to transfer-messenger RNA (tmRNA), required for stable association of tmRNA with ribosomes. tmRNA and SmpB together mimic tRNA shape, replacing the anticodon stem-loop with SmpB. tmRNA is encoded by the ssrA gene; the 2 termini fold to resemble tRNA(Ala) and it encodes a 'tag peptide', a short internal open reading frame. During trans-translation Ala-aminoacylated tmRNA acts like a tRNA, entering the A-site of stalled ribosomes, displacing the stalled mRNA. The ribosome then switches to translate the ORF on the tmRNA; the nascent peptide is terminated with the 'tag peptide' encoded by the tmRNA and targeted for degradation. The ribosome is freed to recommence translation, which seems to be the essential function of trans-translation. The polypeptide is SsrA-binding protein (Trichodesmium erythraeum (strain IMS101)).